We begin with the raw amino-acid sequence, 437 residues long: GTPase Obg (437 aa).

One can recognise an Obg domain in the interval 2–160 (SMFLDTAKIS…RQLELELKIL (159 aa)). Positions 161–338 (ADVGLVGFPS…LLEATAELLA (178 aa)) constitute an OBG-type G domain. GTP-binding positions include 167–174 (GFPSVGKS), 192–196 (FTTIV), 214–217 (DLPG), 284–287 (NKMD), and 319–321 (SSL). Residues S174 and T194 each contribute to the Mg(2+) site. The 79-residue stretch at 359 to 437 (GFAKTEKDFE…IGKFEFEFVD (79 aa)) folds into the OCT domain.

This sequence belongs to the TRAFAC class OBG-HflX-like GTPase superfamily. OBG GTPase family. In terms of assembly, monomer. The cofactor is Mg(2+).

It is found in the cytoplasm. In terms of biological role, an essential GTPase which binds GTP, GDP and possibly (p)ppGpp with moderate affinity, with high nucleotide exchange rates and a fairly low GTP hydrolysis rate. Plays a role in control of the cell cycle, stress response, ribosome biogenesis and in those bacteria that undergo differentiation, in morphogenesis control. The sequence is that of GTPase Obg from Streptococcus pyogenes serotype M2 (strain MGAS10270).